Consider the following 64-residue polypeptide: Neurotoxin BmK-II (64 aa).

Residues 2–64 (RDAYIAKPHN…VPIRIPGNCH (63 aa)) form the LCN-type CS-alpha/beta domain. 4 disulfide bridges follow: C12–C63, C16–C36, C22–C46, and C26–C48.

The protein belongs to the long (4 C-C) scorpion toxin superfamily. Sodium channel inhibitor family. Alpha subfamily. As to expression, expressed by the venom gland.

It localises to the secreted. In terms of biological role, binds to sodium channels (Nav) and inhibits the inactivation of the activated channels, thereby blocking neuronal transmission. This toxin is active against mammals and insects. BmK-II is 6-fold less toxic than BmK-I. The sequence is that of Neurotoxin BmK-II from Olivierus martensii (Manchurian scorpion).